Here is a 331-residue protein sequence, read N- to C-terminus: Hyaluronidase B (331 aa).

Cystine bridges form between Cys-19–Cys-308 and Cys-185–Cys-197. Asn-79 carries an N-linked (GlcNAc...) asparagine glycan. Glu-109 acts as the Proton donor in catalysis.

Belongs to the glycosyl hydrolase 56 family. In terms of tissue distribution, expressed by the venom gland.

The protein localises to the secreted. It carries out the reaction Random hydrolysis of (1-&gt;4)-linkages between N-acetyl-beta-D-glucosamine and D-glucuronate residues in hyaluronate.. Its function is as follows. Hydrolyzes high molecular weight hyaluronic acid to produce small oligosaccharides. The polypeptide is Hyaluronidase B (Vespa velutina (Asian yellow-legged hornet)).